Here is a 618-residue protein sequence, read N- to C-terminus: MKGIVSWAVVSAALVLSATESLAFANVSSFEKRTTTGNGWDLDGKSYDYVIVGGGTAGLVLANRLSANQGTTVAVIEAGNSGYDDNDKFVVPDANLYNSAVNTQYDWQFHTSSQKHMNNRRASWPRGKVLGGSSAVNGLYYVRPSETEVNVWSKLAGGSGRWSWNSLLSGMKKSEHFRGPVKSVQNQLQIQYNAGSHGSNGPIGTTWPAVTYDPVERFIKTADSMSGAINNDPYNGNNHGTYVALSSIDKTNWQRSFSRNGYLDPISKRSNLHVLTGHTVTGIIFDRSGKNAQATGVHYAASSNEASHTVHANKEVIISGGAINSPQILQLSGIGDKNLLNGLGIDVVVDLPGVGENLQDHVSAGMSFKPKNKKDAGPTSVTGDAKADSYVNSAVSYTSLGKLFNNKDSILGKIQARAKQIADSHNVSPAVKQGQSKAYNALADTIFPSKVSPVEILGNVMFGSISIQAALQHPLSRGSIKITSKDPFAYPKINPNYFAENLDLVLLREGFKLIREMSQQSPLKDVIDFETVPGDKVQTNEDWENWIRSAAGTEYHPSSTCAMLPRGDGGVVDENLKVYGTSNLRVVDASVTPIAMSCHLESVVYGLAEVAADIILGN.

An N-terminal signal peptide occupies residues 1-23 (MKGIVSWAVVSAALVLSATESLA). 2 residues coordinate FAD: valine 129 and valine 280. Residue histidine 556 is the Proton donor of the active site. Histidine 599 acts as the Proton acceptor in catalysis.

This sequence belongs to the GMC oxidoreductase family. As to quaternary structure, monomer. Requires FAD as cofactor.

It localises to the secreted. The sequence is that of GMC oxidoreductase family protein Mala s 12 from Malassezia sympodialis (strain ATCC 42132) (Atopic eczema-associated yeast).